We begin with the raw amino-acid sequence, 1406 residues long: MALKNINYLLIFYLSFSLLIYIKNSFCNKNNTRCLSNSCQNNSTCKDFSKDNDCSCSDTANNLDKDCDNMKDPCFSNPCQGSATCVNTPGERSFLCKCPPGYSGTICETTIGSCGKNSCQHGGICHQDPIYPVCICPAGYAGRFCEIDHDECASSPCQNGAVCQDGIDGYSCFCVPGYQGRHCDLEVDECASDPCKNEATCLNEIGRYTCICPHNYSGVNCELEIDECWSQPCLNGATCQDALGAYFCDCAPGFLGDHCELNTDECASQPCLHGGLCVDGENRYSCNCTGSGFTGTHCETLMPLCWSKPCHNNATCEDSVDNYTCHCWPGYTGAQCEIDLNECNSNPCQSNGECVELSSEKQYGRITGLPSSFSYHEASGYVCICQPGFTGIHCEEDVNECSSNPCQNGGTCENLPGNYTCHCPFDNLSRTFYGGRDCSDILLGCTHQQCLNNGTCIPHFQDGQHGFSCLCPSGYTGSLCEIATTLSFEGDGFLWVKSGSVTTKGSVCNIALRFQTVQPMALLLFRSNRDVFVKLELLSGYIHLSIQVNNQSKVLLFISHNTSDGEWHFVEVIFAEAVTLTLIDDSCKEKCIAKAPTPLESDQSICAFQNSFLGGLPVGMTSNGVALLNFYNMPSTPSFVGCLQDIKIDWNHITLENISSGSSLNVKAGCVRKDWCESQPCQSRGRCINLWLSYQCDCHRPYEGPNCLREYVAGRFGQDDSTGYVIFTLDESYGDTISLSMFVRTLQPSGLLLALENSTYQYIRVWLERGRLAMLTPNSPKLVVKFVLNDGNVHLISLKIKPYKIELYQSSQNLGFISASTWKIEKGDVIYIGGLPDKQETELNGGFFKGCIQDVRLNNQNLEFFPNPTNNASLNPVLVNVTQGCAGDNSCKSNPCHNGGVCHSRWDDFSCSCPALTSGKACEEVQWCGFSPCPHGAQCQPVLQGFECIANAVFNGQSGQILFRSNGNITRELTNITFGFRTRDANVIILHAEKEPEFLNISIQDSRLFFQLQSGNSFYMLSLTSLQSVNDGTWHEVTLSMTDPLSQTSRWQMEVDNETPFVTSTIATGSLNFLKDNTDIYVGDRAIDNIKGLQGCLSTIEIGGIYLSYFENVHGFINKPQEEQFLKISTNSVVTGCLQLNVCNSNPCLHGGNCEDIYSSYHCSCPLGWSGKHCELNIDECFSNPCIHGNCSDRVAAYHCTCEPGYTGVNCEVDIDNCQSHQCANGATCISHTNGYSCLCFGNFTGKFCRQSRLPSTVCGNEKTNLTCYNGGNCTEFQTELKCMCRPGFTGEWCEKDIDECASDPCVNGGLCQDLLNKFQCLCDVAFAGERCEVDLADDLISDIFTTIGSVTVALLLILLLAIVASVVTSNKRATQGTYSPSRQEKEGSRVEMWNLMPPPAMERLI.

An N-terminal signal peptide occupies residues 1-25 (MALKNINYLLIFYLSFSLLIYIKNS). The Extracellular segment spans residues 26–1347 (FCNKNNTRCL…DDLISDIFTT (1322 aa)). Residues Asn30, Asn41, and Asn42 are each glycosylated (N-linked (GlcNAc...) asparagine). EGF-like domains lie at 30-68 (NNTR…KDCD), 70-108 (MKDP…TICE), and 110-146 (TIGS…RFCE). 20 cysteine pairs are disulfide-bonded: Cys34–Cys45, Cys39–Cys54, Cys56–Cys67, Cys74–Cys85, Cys79–Cys96, Cys98–Cys107, Cys114–Cys125, Cys119–Cys134, Cys136–Cys145, Cys152–Cys163, Cys157–Cys172, Cys174–Cys183, Cys190–Cys201, Cys195–Cys210, Cys212–Cys221, Cys228–Cys239, Cys233–Cys248, Cys250–Cys259, Cys266–Cys277, and Cys271–Cys286. An EGF-like 4; calcium-binding domain is found at 148–184 (DHDECASSPCQNGAVCQDGIDGYSCFCVPGYQGRHCD). In terms of domain architecture, EGF-like 5; calcium-binding spans 186–222 (EVDECASDPCKNEATCLNEIGRYTCICPHNYSGVNCE). A glycan (N-linked (GlcNAc...) asparagine) is linked at Asn215. Residues 224–260 (EIDECWSQPCLNGATCQDALGAYFCDCAPGFLGDHCE) form the EGF-like 6; calcium-binding domain. Residues 262–299 (NTDECASQPCLHGGLCVDGENRYSCNCTGSGFTGTHCE) form the EGF-like 7; calcium-binding domain. N-linked (GlcNAc...) asparagine glycosylation is present at Asn287. 13 disulfides stabilise this stretch: Cys288-Cys298, Cys305-Cys316, Cys310-Cys325, Cys327-Cys336, Cys343-Cys354, Cys348-Cys383, Cys385-Cys394, Cys401-Cys412, Cys406-Cys421, Cys423-Cys438, Cys445-Cys456, Cys450-Cys469, and Cys471-Cys480. EGF-like domains lie at 301–337 (LMPL…AQCE) and 339–395 (DLNE…IHCE). N-linked (GlcNAc...) asparagine glycans are attached at residues Asn313 and Asn322. Residues 397 to 439 (DVNECSSNPCQNGGTCENLPGNYTCHCPFDNLSRTFYGGRDCS) form the EGF-like 10; calcium-binding domain. Asn418, Asn427, and Asn453 each carry an N-linked (GlcNAc...) asparagine glycan. An EGF-like 11 domain is found at 441-481 (ILLGCTHQQCLNNGTCIPHFQDGQHGFSCLCPSGYTGSLCE). In terms of domain architecture, Laminin G-like 1 spans 485 to 670 (TLSFEGDGFL…GSSLNVKAGC (186 aa)). N-linked (GlcNAc...) asparagine glycans are attached at residues Asn550, Asn561, and Asn657. Disulfide bonds link Cys642–Cys670, Cys676–Cys687, Cys681–Cys696, and Cys698–Cys707. Residues 672 to 708 (RKDWCESQPCQSRGRCINLWLSYQCDCHRPYEGPNCL) form the EGF-like 12 domain. Positions 714–885 (GRFGQDDSTG…PVLVNVTQGC (172 aa)) constitute a Laminin G-like 2 domain. 3 N-linked (GlcNAc...) asparagine glycosylation sites follow: Asn757, Asn871, and Asn880. 6 disulfide bridges follow: Cys851–Cys885, Cys891–Cys902, Cys896–Cys911, Cys913–Cys922, Cys928–Cys939, and Cys933–Cys948. EGF-like domains are found at residues 887 to 923 (GDNS…KACE) and 924 to 960 (EVQW…QSGQ). Residues 950-1137 (ANAVFNGQSG…ISTNSVVTGC (188 aa)) form the Laminin G-like 3 domain. 3 N-linked (GlcNAc...) asparagine glycosylation sites follow: Asn968, Asn975, and Asn1000. 16 disulfide bridges follow: Cys1096-Cys1137, Cys1143-Cys1154, Cys1148-Cys1163, Cys1165-Cys1174, Cys1181-Cys1191, Cys1186-Cys1200, Cys1202-Cys1211, Cys1218-Cys1229, Cys1223-Cys1238, Cys1240-Cys1249, Cys1259-Cys1274, Cys1268-Cys1283, Cys1285-Cys1294, Cys1301-Cys1312, Cys1306-Cys1321, and Cys1323-Cys1332. The EGF-like 15 domain maps to 1139–1175 (QLNVCNSNPCLHGGNCEDIYSSYHCSCPLGWSGKHCE). Residues 1177–1212 (NIDECFSNPCIHGNCSDRVAAYHCTCEPGYTGVNCE) enclose the EGF-like 16; calcium-binding domain. Residue Asn1190 is glycosylated (N-linked (GlcNAc...) asparagine). EGF-like domains are found at residues 1214-1250 (DIDN…KFCR) and 1255-1295 (PSTV…EWCE). N-linked (GlcNAc...) asparagine glycosylation is found at Asn1243, Asn1265, and Asn1273. Positions 1297–1333 (DIDECASDPCVNGGLCQDLLNKFQCLCDVAFAGERCE) constitute an EGF-like 19; calcium-binding domain. The chain crosses the membrane as a helical span at residues 1348-1368 (IGSVTVALLLILLLAIVASVV). Topologically, residues 1369–1406 (TSNKRATQGTYSPSRQEKEGSRVEMWNLMPPPAMERLI) are cytoplasmic. Residues 1370-1406 (SNKRATQGTYSPSRQEKEGSRVEMWNLMPPPAMERLI) are interaction with EPB41L5.

The protein belongs to the Crumbs protein family. As to quaternary structure, component of a complex composed of PALS1, CRB1 and EPB41L5. Within the complex, interacts (via intracellular domain) with PALS1 and EPB41L5 (via FERM domain). Forms a complex with MPP4 and PALS1. Interacts with MPDZ/MUPP1 and MPP4. In terms of processing, extensively glycosylated. In terms of tissue distribution, preferential expression in retina, also expressed in brain, testis, fetal brain and fetal eye. Expressed at the outer limiting membrane and apical to adherens junctions in the retina.

Its subcellular location is the apical cell membrane. It is found in the secreted. The protein localises to the cell projection. The protein resides in the cilium. It localises to the photoreceptor outer segment. Its subcellular location is the photoreceptor inner segment. Functionally, plays a role in photoreceptor morphogenesis in the retina. May maintain cell polarization and adhesion. The sequence is that of Protein crumbs homolog 1 from Homo sapiens (Human).